The following is a 796-amino-acid chain: YY1-associated protein 1 (796 aa).

Disordered stretches follow at residues 1–45 and 463–488; these read MEEE…ATPS and IQPS…SEAP. The span at 23 to 36 shows a compositional bias: basic and acidic residues; that stretch reads PPDKREGSAVDPGK. Positions 463-472 are enriched in low complexity; it reads IQPSPSLQPS. Polar residues predominate over residues 473–485; it reads FNPGKTPAQSTHS. Serine 724 is subject to Phosphoserine. The disordered stretch occupies residues 755–776; the sequence is RQALEPLPQGIQESLNNSSPGD. The segment covering 765–774 has biased composition (polar residues); the sequence is IQESLNNSSP.

Interacts with YY1. Interacts with MAD2L2. Interacts with INO80. In terms of tissue distribution, ubiquitous. Detected in small intestine, skeletal muscle, lung, pancreas, brain, stomach, spleen, colon and heart. Detected at very low levels in healthy liver. Highly expressed in most liver carcinomas.

The protein localises to the cytoplasm. Its subcellular location is the nucleus. The protein resides in the nucleoplasm. It localises to the nucleolus. Functionally, associates with the INO80 chromatin remodeling complex, which is responsible for transcriptional regulation, DNA repair, and replication. Enhances transcription activation by YY1. Plays a role in cell cycle regulation. In Homo sapiens (Human), this protein is YY1-associated protein 1.